Reading from the N-terminus, the 447-residue chain is Dihydroorotase (447 aa).

2 residues coordinate Zn(2+): His84 and His86. Substrate-binding positions include 86-88 and Asn118; that span reads HLR. Zn(2+) contacts are provided by Asp174, His201, and His255. Asn301 provides a ligand contact to substrate. Asp328 contributes to the Zn(2+) binding site. Residue Asp328 is part of the active site. Substrate-binding positions include His332 and 346–347; that span reads FG.

This sequence belongs to the metallo-dependent hydrolases superfamily. DHOase family. Class I DHOase subfamily. Zn(2+) is required as a cofactor.

It catalyses the reaction (S)-dihydroorotate + H2O = N-carbamoyl-L-aspartate + H(+). The protein operates within pyrimidine metabolism; UMP biosynthesis via de novo pathway; (S)-dihydroorotate from bicarbonate: step 3/3. In terms of biological role, catalyzes the reversible cyclization of carbamoyl aspartate to dihydroorotate. The protein is Dihydroorotase of Anaplasma phagocytophilum (strain HZ).